The chain runs to 102 residues: Putative ribosomal protein uL13-like (102 aa).

It belongs to the universal ribosomal protein uL13 family.

This Homo sapiens (Human) protein is Putative ribosomal protein uL13-like (RPL13AP3).